Reading from the N-terminus, the 137-residue chain is Fatty acid-binding protein homolog 7 (137 aa).

It belongs to the calycin superfamily. Fatty-acid binding protein (FABP) family.

This Caenorhabditis elegans protein is Fatty acid-binding protein homolog 7 (lbp-7).